Reading from the N-terminus, the 145-residue chain is Ribosomal RNA large subunit methyltransferase H (145 aa).

S-adenosyl-L-methionine contacts are provided by residues L64, G93, and 112-117 (LSALTF).

It belongs to the RNA methyltransferase RlmH family. In terms of assembly, homodimer.

It localises to the cytoplasm. It carries out the reaction pseudouridine(1915) in 23S rRNA + S-adenosyl-L-methionine = N(3)-methylpseudouridine(1915) in 23S rRNA + S-adenosyl-L-homocysteine + H(+). Functionally, specifically methylates the pseudouridine at position 1915 (m3Psi1915) in 23S rRNA. This chain is Ribosomal RNA large subunit methyltransferase H, found in Prochlorococcus marinus (strain SARG / CCMP1375 / SS120).